We begin with the raw amino-acid sequence, 69 residues long: UPF0346 protein llmg_2280 (69 aa).

Belongs to the UPF0346 family.

In Lactococcus lactis subsp. cremoris (strain MG1363), this protein is UPF0346 protein llmg_2280.